The following is a 178-amino-acid chain: NADH-quinone oxidoreductase subunit B (178 aa).

[4Fe-4S] cluster contacts are provided by C45, C46, C111, and C140.

Belongs to the complex I 20 kDa subunit family. NDH-1 is composed of 15 different subunits. Subunits NuoB, C, D, E, F, and G constitute the peripheral sector of the complex. [4Fe-4S] cluster serves as cofactor.

Its subcellular location is the cell membrane. The catalysed reaction is a quinone + NADH + 5 H(+)(in) = a quinol + NAD(+) + 4 H(+)(out). Functionally, NDH-1 shuttles electrons from NADH, via FMN and iron-sulfur (Fe-S) centers, to quinones in the respiratory chain. The immediate electron acceptor for the enzyme in this species is believed to be a menaquinone. Couples the redox reaction to proton translocation (for every two electrons transferred, four hydrogen ions are translocated across the cytoplasmic membrane), and thus conserves the redox energy in a proton gradient. In Deinococcus geothermalis (strain DSM 11300 / CIP 105573 / AG-3a), this protein is NADH-quinone oxidoreductase subunit B.